The following is a 501-amino-acid chain: Dipeptide and tripeptide permease A (501 aa).

The Cytoplasmic portion of the chain corresponds to 1–21; that stretch reads MSTANKKPTESVSLNAFKQPK. Residues 22 to 44 form a helical membrane-spanning segment; it reads AFYLIFSIELWERFGYYGLQGIM. At 45–59 the chain is on the periplasmic side; it reads AVYLVKQLGMSEADS. Residues 60–80 traverse the membrane as a helical segment; that stretch reads ITLFSSFSALVYGLVAIGGWL. At 81–89 the chain is on the cytoplasmic side; that stretch reads GDKILGTKR. A helical membrane pass occupies residues 90-110; sequence VIMLGAVVLAIGYALVAWSGH. A topological domain (periplasmic) is located at residue Asp-111. A helical transmembrane segment spans residues 112–132; sequence AGIVYMGMAAIAVGNGLFKAN. Over 133–153 the chain is Cytoplasmic; sequence PSSLLSTCYAKDDPRLDGAFT. The helical transmembrane segment at 154–174 threads the bilayer; the sequence is MYYMSVNIGSFFSMLATPWLA. At 175–178 the chain is on the periplasmic side; that stretch reads ARYG. The helical transmembrane segment at 179–199 threads the bilayer; it reads WSTAFALSVVGMLITVVNFAF. Residues 200 to 219 are Cytoplasmic-facing; it reads CQRWVKSYGSKPDFEPINFR. Residues 220 to 240 traverse the membrane as a helical segment; it reads NLLLTIVGIVVLIAVATWLLH. The Periplasmic portion of the chain corresponds to 241 to 246; that stretch reads NQDIAR. The chain crosses the membrane as a helical span at residues 247 to 267; sequence MVLGVIALGIVIIFGKEAFSM. The Cytoplasmic segment spans residues 268–274; it reads HGAARRK. The helical transmembrane segment at 275 to 295 threads the bilayer; the sequence is MIVAFILMLQAIIFFVLYSQM. The Periplasmic portion of the chain corresponds to 296-320; sequence PTSLNFFAIRNVEHSILGIAFEPEQ. The helical transmembrane segment at 321 to 341 threads the bilayer; sequence YQALNPFWIITGSPILAAIYN. At 342–352 the chain is on the cytoplasmic side; sequence RMGDTLPMPMK. Residues 353–373 form a helical membrane-spanning segment; that stretch reads FAIGMVLCSGAFLILPLGAKF. At 374–383 the chain is on the periplasmic side; that stretch reads ANDAGIVSVN. The chain crosses the membrane as a helical span at residues 384 to 404; sequence WLIASYGLQSIGELMISGLGL. The Cytoplasmic segment spans residues 405-414; sequence AMVAQLVPQR. The helical transmembrane segment at 415-435 threads the bilayer; the sequence is LMGFIMGSWFLTTAGANIIGG. At 436-459 the chain is on the periplasmic side; that stretch reads YVANLMAVPSDVTDPLMSLEVYGR. A helical transmembrane segment spans residues 460-480; it reads VFMQIGIATAVIAVLMLLTAP. At 481–501 the chain is on the cytoplasmic side; sequence KLNRMTQDDDTAEKGSKAATV.

Belongs to the major facilitator superfamily. Proton-dependent oligopeptide transporter (POT/PTR) (TC 2.A.17) family. DtpA subfamily.

The protein resides in the cell inner membrane. Functionally, proton-dependent permease that transports di- and tripeptides. The chain is Dipeptide and tripeptide permease A from Salmonella typhi.